Here is a 1018-residue protein sequence, read N- to C-terminus: Pleckstrin homology domain-containing family M member 2 (1018 aa).

Met-1 bears the N-acetylmethionine mark. Positions 1 to 289 (MEPREVKDRI…PDQPDACTEL (289 aa)) are interaction with KIF5B. The 123-residue stretch at 36-158 (RNHDKVLQRL…IRFDLDLDAP (123 aa)) folds into the RUN domain. Disordered regions lie at residues 210 to 367 (SAIA…SSEL), 407 to 440 (TWCSHADPPEQSFRAGSPGEAPEKPPFCDFSEGL), 452 to 520 (ESPS…DSQL), 526 to 545 (EPLVSQEPVPEPVSQPEPGT), and 555 to 583 (DQPSPCLSSAEDSGVEEGQGSPSEMTHPS). The span at 230 to 245 (STASDLTSSKTSTKSP) shows a compositional bias: low complexity. The span at 258–270 (ETASSDTTPVHTT) shows a compositional bias: polar residues. Over residues 294–306 (VTKKKKIGKKKKT) the composition is skewed to basic residues. 2 stretches are compositionally biased toward polar residues: residues 316–325 (HPTSSQQKCG) and 347–367 (VLASPQEQGEGLSSTAGSSEL). Phosphoserine is present on Ser-423. In terms of domain architecture, PH spans 770–872 (TITKEGMLHY…WMQHLCQAVS (103 aa)).

As to quaternary structure, interacts with KLC2 (via TPR repeats). Interacts with KIF5B. Interacts with BORCS5. Interacts (via RUN domain) with ARL8B (GTP-bound form); PLEKHM1 and PLEKHM2 compete for interaction with ARL8B. Interacts with ARL8A.

It localises to the cytoplasm. The protein resides in the lysosome membrane. Its function is as follows. Plays a role in lysosomes movement and localization at the cell periphery acting as an effector of ARL8B. Required for ARL8B to exert its effects on lysosome location, recruits kinesin-1 to lysosomes and hence direct their movement toward microtubule plus ends. Binding to ARL8B provides a link from lysosomal membranes to plus-end-directed motility. Critical factor involved in NK cell-mediated cytotoxicity. Drives the polarization of cytolytic granules and microtubule-organizing centers (MTOCs) toward the immune synapse between effector NK lymphocytes and target cells. Required for maintenance of the Golgi apparatus organization. May play a role in membrane tubulation. The polypeptide is Pleckstrin homology domain-containing family M member 2 (Mus musculus (Mouse)).